Consider the following 182-residue polypeptide: Helofensin-3 (182 aa).

An N-terminal signal peptide occupies residues 1–26 (MQMDWLFIAVISGIGLLSSGVPGTQG). Residues 27–64 (AYTTEQCRALNGSCNFYACFPKNVIIGKCDWWGWSCCA) form a C(6)C(4)C(9)C(6)CC 1; approximate repeat. A C(6)C(4)C(9)C(6)CC 2; approximate repeat occupies 65–101 (RTPLERCTAKKGTCTKTGCTKTDTDHGPCDGGAQCCQ). A C(6)C(4)C(9)C(6)CC 3; approximate repeat occupies 102–138 (RDPVKYCKFHGNVCGRGKCPMDHIPIGECTPGYPCCK). The C(6)C(4)C(9)C(6)CC 4; approximate repeat unit spans residues 139–176 (RDGPAYCKSKGGKCLNRCPQIVPTNVIGVCATGVPCCK).

The protein belongs to the beta-defensin family. Helofensin subfamily. Expressed by the mandibular venom gland.

It is found in the secreted. In terms of biological role, lethal toxin which possesses an inhibitory effect on direct electrical stimulation of the isolated hemi-diaphragm of mice. Neither hemorrhagic nor hemolytic activities are detected. Phospholipase A2 activity, proteolytic activity and arginine esterolytic activity are absent. In Heloderma suspectum cinctum (Banded Gila monster), this protein is Helofensin-3.